A 238-amino-acid polypeptide reads, in one-letter code: Type III secretion protein hrcQa (238 aa).

The interval 66–238 (DAEALLSLLG…SHEEHRHHEY (173 aa)) is hrcQa-C.

As to quaternary structure, interacts with hrcQb.

The protein localises to the cell inner membrane. Functionally, component of the type III secretion system, which is required for effector protein delivery, parasitism, and pathogenicity. Probably participates in the formation of a C-ring-like assembly along with hrcQb. The protein is Type III secretion protein hrcQa (hrcQa) of Pseudomonas savastanoi pv. phaseolicola (Pseudomonas syringae pv. phaseolicola).